Reading from the N-terminus, the 1264-residue chain is Valine--tRNA ligase (1264 aa).

Residue Ser-2 is modified to N-acetylserine. Residues 89–219 (GSRAAVLVQQ…YSGARPLSHQ (131 aa)) form the GST C-terminal domain. The interval 217 to 296 (SHQPGPEAPA…GEKKDVSGPM (80 aa)) is disordered. 2 stretches are compositionally biased toward basic and acidic residues: residues 234 to 248 (LKKE…EKFQ) and 261 to 275 (GEKK…KRDP). The 'HIGH' region motif lies at 344–354 (PNVTGSLHLGH). Phosphoserine occurs at positions 437 and 527. Position 645 is an N6-acetyllysine (Lys-645). A 'KMSKS' region motif is present at residues 862–866 (KMSKS). Lys-865 serves as a coordination point for ATP.

Belongs to the class-I aminoacyl-tRNA synthetase family. As to quaternary structure, forms high-molecular-mass aggregates with elongation factor 1.

It catalyses the reaction tRNA(Val) + L-valine + ATP = L-valyl-tRNA(Val) + AMP + diphosphate. Can be regulated by protein kinase C-dependent phosphorylation. Functionally, catalyzes the attachment of valine to tRNA(Val). This Homo sapiens (Human) protein is Valine--tRNA ligase.